We begin with the raw amino-acid sequence, 340 residues long: MEITDMPTDDSNNGIIDYVSTGHLPDPETVVKLVQEAHKRFSTDTAGVVSNVYPALERIPADLFGICMVGTNGKIHSAGDVDYEFTIMSVSKPFVFALVCQAIGAKTAREKLGVNSTGMAFNSVTAIERASDGRTNPMVNSGAIATTSLVPGATSDEQWKFIYDGLCRFAGRELTLNEEVYQSACETNFRNRGIANVLQGYGRLGCDPIIATDLYTRQCSLNVSARDLAVMGATLADGGVNPLTRERVVDNDICHYALAVMVTAGLYETSGDWLYDIGLPGKSGIGGGIVTVSPGKGGLGTFAPLLDSAGNSIKGQLAARFLSRSLGMDMFVSEPYTEKN.

Residues Ser89, Asn140, Asn191, Tyr215, and Tyr267 each contribute to the substrate site.

This sequence belongs to the glutaminase family. In terms of assembly, homotetramer.

It carries out the reaction L-glutamine + H2O = L-glutamate + NH4(+). This is Glutaminase 2 from Yersinia pestis.